Consider the following 335-residue polypeptide: MTSFCSMISLLLLLSLSSAVFSDDASFQKLPVPETRSGPEAFAFDSTGKGFYTGVSGGKILKYLPETGYVDFAQITESSNSSWCDGTIGTALAGRCGRPAGIAFNEKTGDLYVADAPLGLHVISPAGGLATKITDSVDGKPFKFLDGLDVDPTTGVVYFTSFSSRFSPIQVLIALGLKDATGKLYKYDPSTKVVTVLMEGLSGSAGCAVSSDGSFVLVSQFTKSNIKRYWIKGPKAGSSEDFTNSVSNPDNIKRIGSTGNFWVASVVNKIIVPTNPSAVKVNSNGEVLQTIPLKDKFGDTLLSEVNEFEGNLYIGTLTGPFAGILKLEKGSCPAT.

Residues 1-22 (MTSFCSMISLLLLLSLSSAVFS) form the signal peptide. N-linked (GlcNAc...) asparagine glycosylation is present at asparagine 80.

The protein belongs to the strictosidine synthase family.

Its subcellular location is the vacuole. It carries out the reaction 3alpha(S)-strictosidine + H2O = secologanin + tryptamine. It functions in the pathway alkaloid biosynthesis; 3alpha(S)-strictosidine biosynthesis; 3alpha(S)-strictosidine from secologanin and tryptamine: step 1/1. Functionally, catalyzes the stereospecific condensation of tryptamine with secologanin to form strictosidine, the key intermediate of indole alkaloid biosynthesis. The protein is Protein STRICTOSIDINE SYNTHASE-LIKE 12 of Arabidopsis thaliana (Mouse-ear cress).